We begin with the raw amino-acid sequence, 154 residues long: Putative glutamine amidotransferase-like protein RP712 (154 aa).

The Glutamine amidotransferase type-1 domain maps to 1–94 (MSIEKEKFWA…QQSVWSFHNK (94 aa)).

This chain is Putative glutamine amidotransferase-like protein RP712, found in Rickettsia prowazekii (strain Madrid E).